A 481-amino-acid polypeptide reads, in one-letter code: Tryptophan 5-hydroxylase (481 aa).

The ACT domain maps to 56–131; it reads SVIFSLKNEI…NVISMSPPEN (76 aa). Residues Tyr272, Arg294, and Thr302 each contribute to the L-tryptophan site. Residues His309, His314, and Glu354 each coordinate Fe cation. L-tryptophan contacts are provided by Ser373 and Ile403.

It belongs to the biopterin-dependent aromatic amino acid hydroxylase family. In terms of assembly, homotetramer. Requires Fe(2+) as cofactor.

It carries out the reaction (6R)-L-erythro-5,6,7,8-tetrahydrobiopterin + L-tryptophan + O2 = 5-hydroxy-L-tryptophan + (4aS,6R)-4a-hydroxy-L-erythro-5,6,7,8-tetrahydrobiopterin. It participates in aromatic compound metabolism; serotonin biosynthesis; serotonin from L-tryptophan: step 1/2. Oxidizes L-tryptophan to 5-hydroxy-l-tryptophan in the rate-determining step of serotonin biosynthesis. The protein is Tryptophan 5-hydroxylase (tph1) of Xenopus laevis (African clawed frog).